Reading from the N-terminus, the 628-residue chain is uncharacterized protein (628 aa).

It belongs to the ATP-dependent AMP-binding enzyme family.

This is an uncharacterized protein from Pseudomonas aeruginosa (strain ATCC 15692 / DSM 22644 / CIP 104116 / JCM 14847 / LMG 12228 / 1C / PRS 101 / PAO1).